Reading from the N-terminus, the 513-residue chain is Gluconokinase (513 aa).

Residues lysine 16, threonine 261, glycine 300, and 412-416 (GFARS) contribute to the ATP site.

This sequence belongs to the FGGY kinase family.

It carries out the reaction D-gluconate + ATP = 6-phospho-D-gluconate + ADP + H(+). It functions in the pathway carbohydrate acid metabolism; D-gluconate degradation. Catabolite repression by gluconate. The sequence is that of Gluconokinase (gntK) from Bacillus subtilis (strain 168).